Reading from the N-terminus, the 127-residue chain is Protein ApaG (127 aa).

The region spanning 3 to 127 (DTNKYRIEVQ…FVLASPRALH (125 aa)) is the ApaG domain.

The protein is Protein ApaG of Dechloromonas aromatica (strain RCB).